Consider the following 424-residue polypeptide: Adenylosuccinate synthetase (424 aa).

Residues 12 to 18 (GDEGKGK) and 40 to 42 (GHT) each bind GTP. The active-site Proton acceptor is Asp13. Mg(2+) contacts are provided by Asp13 and Gly40. IMP-binding positions include 13–16 (DEGK), 38–41 (NAGH), Thr130, Arg144, Asn220, Thr235, and Arg299. His41 (proton donor) is an active-site residue. 295 to 301 (VTTGRKR) is a substrate binding site. GTP contacts are provided by residues Arg301, 327-329 (KLD), and 412-414 (GTG).

It belongs to the adenylosuccinate synthetase family. As to quaternary structure, homodimer. Requires Mg(2+) as cofactor.

Its subcellular location is the cytoplasm. It carries out the reaction IMP + L-aspartate + GTP = N(6)-(1,2-dicarboxyethyl)-AMP + GDP + phosphate + 2 H(+). Its pathway is purine metabolism; AMP biosynthesis via de novo pathway; AMP from IMP: step 1/2. In terms of biological role, plays an important role in the de novo pathway and in the salvage pathway of purine nucleotide biosynthesis. Catalyzes the first committed step in the biosynthesis of AMP from IMP. The polypeptide is Adenylosuccinate synthetase (adB) (Emericella nidulans (strain FGSC A4 / ATCC 38163 / CBS 112.46 / NRRL 194 / M139) (Aspergillus nidulans)).